Consider the following 182-residue polypeptide: MGILFTRMFSSVFGNKEARILVLGLDNAGKTTILYRLQMGEVVSTIPTIGFNVETVQYNNIKFQVWDLGGQTSIRPYWRCYFPNTQAVIYVVDSSDTDRIGVAKEEFHAILEEEELKGAVVLIFANKQDLPGALDDAAVTEALELHKIKSRQWAIFKTCAVKGEGLFEGLDWLSNTLKSGSG.

Glycine 2 carries N-myristoyl glycine lipidation. Residues 24–31 (GLDNAGKT), 67–71 (DLGGQ), and 126–129 (NKQD) each bind GTP.

It belongs to the small GTPase superfamily. Arf family.

Its subcellular location is the golgi apparatus. It carries out the reaction GTP + H2O = GDP + phosphate + H(+). In terms of biological role, GTP-binding protein involved in protein trafficking; may modulate vesicle budding and uncoating within the Golgi apparatus. The chain is ADP-ribosylation factor 1 (ARF1) from Brassica rapa subsp. pekinensis (Chinese cabbage).